The primary structure comprises 345 residues: Phosphoribosylformylglycinamidine cyclo-ligase (345 aa).

It belongs to the AIR synthase family.

It is found in the cytoplasm. The catalysed reaction is 2-formamido-N(1)-(5-O-phospho-beta-D-ribosyl)acetamidine + ATP = 5-amino-1-(5-phospho-beta-D-ribosyl)imidazole + ADP + phosphate + H(+). It participates in purine metabolism; IMP biosynthesis via de novo pathway; 5-amino-1-(5-phospho-D-ribosyl)imidazole from N(2)-formyl-N(1)-(5-phospho-D-ribosyl)glycinamide: step 2/2. The sequence is that of Phosphoribosylformylglycinamidine cyclo-ligase from Aeromonas hydrophila subsp. hydrophila (strain ATCC 7966 / DSM 30187 / BCRC 13018 / CCUG 14551 / JCM 1027 / KCTC 2358 / NCIMB 9240 / NCTC 8049).